The sequence spans 145 residues: Protein SprT-like (145 aa).

One can recognise a SprT-like domain in the interval 4-140 (TNYVQEVSLA…VCGNCHGKLM (137 aa)). H64 is a binding site for Zn(2+). E65 is a catalytic residue. Zn(2+) is bound at residue H68.

It belongs to the SprT family. Zn(2+) is required as a cofactor.

Its subcellular location is the cytoplasm. The chain is Protein SprT-like from Streptococcus pyogenes serotype M1.